Reading from the N-terminus, the 413-residue chain is Putative glutamate--cysteine ligase 2 (413 aa).

The tract at residues 392–413 (GGVCALSTPQGDPLPGWAERLH) is disordered.

The protein belongs to the glutamate--cysteine ligase type 2 family. YbdK subfamily.

The enzyme catalyses L-cysteine + L-glutamate + ATP = gamma-L-glutamyl-L-cysteine + ADP + phosphate + H(+). Its function is as follows. ATP-dependent carboxylate-amine ligase which exhibits weak glutamate--cysteine ligase activity. This is Putative glutamate--cysteine ligase 2 from Bordetella bronchiseptica (strain ATCC BAA-588 / NCTC 13252 / RB50) (Alcaligenes bronchisepticus).